Consider the following 227-residue polypeptide: Cytidylate kinase (227 aa).

12–20 (GPSGAGKGT) contributes to the ATP binding site.

Belongs to the cytidylate kinase family. Type 1 subfamily.

It is found in the cytoplasm. The enzyme catalyses CMP + ATP = CDP + ADP. The catalysed reaction is dCMP + ATP = dCDP + ADP. The chain is Cytidylate kinase from Salmonella paratyphi A (strain ATCC 9150 / SARB42).